Consider the following 352-residue polypeptide: C-C chemokine receptor type 5 (352 aa).

The Extracellular segment spans residues 1–30; it reads MDYQVSSPIYDIDYGASEPCRKTDVKQMGA. A Sulfotyrosine modification is found at Tyr-3. O-linked (GalNAc...) serine glycans are attached at residues Ser-6 and Ser-7. Sulfotyrosine occurs at positions 10 and 14. 2 disulfide bridges follow: Cys-20/Cys-269 and Cys-101/Cys-178. The chain crosses the membrane as a helical span at residues 31-58; that stretch reads HLLPPLYSMVFLFGFVGNMLVVLILVNC. Topologically, residues 59 to 68 are cytoplasmic; sequence KRPKSMTDIY. Residues 69 to 89 traverse the membrane as a helical segment; sequence LLNLAISDLLFLFTVPFWAHY. Over 90–102 the chain is Extracellular; the sequence is AAGQWDFGNTMCQ. The chain crosses the membrane as a helical span at residues 103–124; sequence FLTGLYFIGFFSGIFFIILLTI. Residues 125–141 lie on the Cytoplasmic side of the membrane; it reads DRYLAIVHAVFALKART. Residues 142 to 166 traverse the membrane as a helical segment; that stretch reads VTFGVMTSVITWVVAVFASLPGIIF. The Extracellular segment spans residues 167–198; the sequence is TRSQKEGYHYTCSPHFPFGQYQFWKNFETLKM. A helical membrane pass occupies residues 199-218; that stretch reads VILGLVLPLLVMVICYSGIL. The Cytoplasmic segment spans residues 219–235; it reads KTLLRCRNEKKRHRAVR. The helical transmembrane segment at 236-260 threads the bilayer; it reads LIFTIMIVYFLFWAPYNIVLLLNTY. Residues 261–277 lie on the Extracellular side of the membrane; it reads QEFFGLNNCSSSNRLDQ. The chain crosses the membrane as a helical span at residues 278-301; it reads AMQVTETLGMTHCCVNPIIYAFVG. The Cytoplasmic portion of the chain corresponds to 302 to 352; sequence EKFRNYLLVFFQKHIAKCFCECCSIFQKEAPERANSVYTRSTGEQEISVGL. Residues Cys-321, Cys-323, and Cys-324 are each lipidated (S-palmitoyl cysteine). Residues Ser-337, Ser-342, and Ser-349 each carry the phosphoserine; by BARK1 modification.

The protein belongs to the G-protein coupled receptor 1 family. In terms of assembly, interacts with PRAF2. Efficient ligand binding to CCL3/MIP-1alpha and CCL4/MIP-1beta requires sulfation, O-glycosylation and sialic acid modifications. Glycosylation on Ser-6 is required for efficient binding of CCL4. Interacts with GRK2. Interacts with ARRB1 and ARRB2. Interacts with CNIH4. Interacts with S100A4; this interaction stimulates T-lymphocyte chemotaxis. Post-translationally, sulfated on at least 2 of the N-terminal tyrosines. Sulfation is required for efficient binding of the chemokines, CCL3 and CCL4. Palmitoylation in the C-terminal is important for cell surface expression. In terms of processing, phosphorylation on serine residues in the C-terminal is stimulated by binding CC chemokines especially by APO-RANTES. Post-translationally, O-glycosylated, but not N-glycosylated. Ser-6 appears to be the major site even if Ser-7 may be also O-glycosylated. Also sialylated glycans present which contribute to chemokine binding. Ser-17 may also be glycosylated and, if so, with small moieties such as a T-antigen.

The protein resides in the cell membrane. Functionally, receptor for a number of inflammatory CC-chemokines including CCL3/MIP-1-alpha, CCL4/MIP-1-beta and RANTES and subsequently transduces a signal by increasing the intracellular calcium ion level. May play a role in the control of granulocytic lineage proliferation or differentiation. Participates in T-lymphocyte migration to the infection site by acting as a chemotactic receptor. This Ateles geoffroyi (Black-handed spider monkey) protein is C-C chemokine receptor type 5 (CCR5).